Consider the following 125-residue polypeptide: Small ribosomal subunit protein uS12 (125 aa).

Positions 1-28 (MPTISQLIGSERKRLTRKTKSPALKSCP) are disordered. Asp89 is modified (3-methylthioaspartic acid). The disordered stretch occupies residues 104–125 (TAGVKDRRQSRSKYGAKAPKNN).

This sequence belongs to the universal ribosomal protein uS12 family. As to quaternary structure, part of the 30S ribosomal subunit. Contacts proteins S8 and S17. May interact with IF1 in the 30S initiation complex.

In terms of biological role, with S4 and S5 plays an important role in translational accuracy. Functionally, interacts with and stabilizes bases of the 16S rRNA that are involved in tRNA selection in the A site and with the mRNA backbone. Located at the interface of the 30S and 50S subunits, it traverses the body of the 30S subunit contacting proteins on the other side and probably holding the rRNA structure together. The combined cluster of proteins S8, S12 and S17 appears to hold together the shoulder and platform of the 30S subunit. This is Small ribosomal subunit protein uS12 from Prochlorococcus marinus (strain MIT 9515).